The primary structure comprises 114 residues: uncharacterized protein (114 aa).

Residues 7 to 27 (YIFSFWFFFLVEYVVTFRLFL) traverse the membrane as a helical segment. The interval 90–114 (KNSPEKKKFKRGLPISSKYTDGKKR) is disordered.

The protein resides in the membrane. This is an uncharacterized protein from Saccharomyces cerevisiae (strain ATCC 204508 / S288c) (Baker's yeast).